Here is a 1286-residue protein sequence, read N- to C-terminus: ABC transporter B family member 4 (1286 aa).

A disordered region spans residues 1-39 (MASESGLNGDPNILEEVSETKRDKEEEEEVKKTEKKDEE). A compositionally biased stretch (basic and acidic residues) spans 18–39 (SETKRDKEEEEEVKKTEKKDEE). The helical transmembrane segment at 60–80 (FLLMILGTLGSIGNGLGFPLM) threads the bilayer. In terms of domain architecture, ABC transmembrane type-1 1 spans 63 to 349 (MILGTLGSIG…TSPCLSAFAA (287 aa)). Asparagine 94 and asparagine 97 each carry an N-linked (GlcNAc...) asparagine glycan. 5 consecutive transmembrane segments (helical) span residues 109-129 (FVWL…GWMI), 186-206 (IQLL…GWLL), 208-228 (LVML…AIVI), 288-308 (GLGL…AVWY), and 317-337 (GYTG…SMSL). Residues 384-620 (IELKDVYFTY…PEGAYSQLIR (237 aa)) form the ABC transporter 1 domain. 419-426 (GQSGSGKS) contributes to the ATP binding site. N-linked (GlcNAc...) asparagine glycans are attached at residues asparagine 500 and asparagine 571. Residues 625 to 636 (KKSDENAAEEQK) show a composition bias toward basic and acidic residues. A disordered region spans residues 625–669 (KKSDENAAEEQKMSSIESFKQSSLRKSSLGRSLSKGGSSRGNSSR). Over residues 646-669 (SSLRKSSLGRSLSKGGSSRGNSSR) the composition is skewed to low complexity. N-linked (GlcNAc...) asparagine glycosylation occurs at asparagine 666. Phosphoserine is present on serine 671. The ABC transmembrane type-1 2 domain maps to 720–1007 (LILGSISAAA…SSSLSPDSSK (288 aa)). 2 helical membrane passes run 721–741 (ILGS…GILI) and 764–784 (IIFM…TFFF). N-linked (GlcNAc...) asparagine glycosylation is found at asparagine 816 and asparagine 846. The next 4 helical transmembrane spans lie at 850-870 (ILAG…VVLA), 871-891 (MLPL…GFSA), 942-962 (GIVS…SYAA), and 976-996 (TTFD…MAIS). Residues 1042–1279 (IELRHVSFKY…KDGVYASLVQ (238 aa)) enclose the ABC transporter 2 domain. An ATP-binding site is contributed by 1077-1084 (GESGSGKS). Asparagine 1131 and asparagine 1230 each carry an N-linked (GlcNAc...) asparagine glycan.

This sequence belongs to the ABC transporter superfamily. ABCB family. Multidrug resistance exporter (TC 3.A.1.201) subfamily. Interacts with 1-naphthylphthalamic acid (NPA). In terms of processing, phosphorylation level varies significantly during early response to bacterial elicitor. In terms of tissue distribution, mostly expressed in roots, especially in the root elongation zone and lateral roots. In mature portion of the root, expressed in the epidermis and cortex. In the root elongation zone, confined to epidermis. In root tips, present in the root cap, S3 columella and epidermal cells.

It is found in the cell membrane. Its function is as follows. Auxin influx transporter that mediates the transport of auxin in roots. Contributes to the basipetal transport in hypocotyls and root tips by establishing an auxin uptake sink in the root cap. Confers sensitivity to 1-N-naphthylphthalamic acid (NPA). Regulates the root elongation, the initiation of lateral roots and the development of root hairs. Can transport IAA, indole-3-propionic acid, NPA syringic acid, vanillic acid and some auxin metabolites, but not 2,4-D and 1-naphthaleneacetic acid. The polypeptide is ABC transporter B family member 4 (ABCB4) (Arabidopsis thaliana (Mouse-ear cress)).